The chain runs to 348 residues: Rhodopsin (348 aa).

Over 1 to 33 (TEGPYFYVPMVNTTGIVRSPYEYPQYYLVNPAA) the chain is Extracellular. An N-linked (GlcNAc...) asparagine glycan is attached at asparagine 12. The helical transmembrane segment at 34 to 58 (FAILGAYMFFLIIVGFPVNFMTLYV) threads the bilayer. Over 59 to 70 (TLEHKKLRTPLN) the chain is Cytoplasmic. The chain crosses the membrane as a helical span at residues 71 to 93 (YILLNLAVADLFMVIGGFTTTMY). Topologically, residues 94 to 107 (TSMHGYFVLGRLGC) are extracellular. Cysteine 107 and cysteine 184 are oxidised to a cystine. The helical transmembrane segment at 108 to 130 (NLEGFFATLGGMISLWSLAVLAI) threads the bilayer. The short motif at 131–133 (ERW) is the 'Ionic lock' involved in activated form stabilization element. The Cytoplasmic portion of the chain corresponds to 131-149 (ERWVVVCKPISNFRFGENH). The helical transmembrane segment at 150-170 (AIMGVSLTWGMALACTVPPLV) threads the bilayer. The Extracellular portion of the chain corresponds to 171–199 (GWSRYIPEGMQCSCGIDYYTRAEGFNNET). N-linked (GlcNAc...) asparagine glycosylation occurs at asparagine 197. Residues 200–221 (FVLYMFCCHFTVPLTIIFFCYG) traverse the membrane as a helical segment. Residues 222-249 (RLLCAVKEAAAAQQESETTQRAEREVTR) are Cytoplasmic-facing. Residues 250–271 (MVVIMVIGFLVCWLPYASVAWF) form a helical membrane-spanning segment. Over 272 to 283 (VFTHQGSEFGPL) the chain is Extracellular. A helical membrane pass occupies residues 284-305 (FMTIPAFFAKSSAIYNPMIYIC). The residue at position 293 (lysine 293) is an N6-(retinylidene)lysine. At 306–348 (MNKQFRHCMITTLFCGKNPFEGEEEGASSTKTEASSASSVSPA) the chain is on the cytoplasmic side. The S-palmitoyl cysteine moiety is linked to residue cysteine 320. Residues 327–348 (GEEEGASSTKTEASSASSVSPA) form a disordered region. A compositionally biased stretch (low complexity) spans 332 to 348 (ASSTKTEASSASSVSPA).

The protein belongs to the G-protein coupled receptor 1 family. Opsin subfamily. In terms of processing, phosphorylated on some or all of the serine and threonine residues present in the C-terminal region. Contains one covalently linked retinal chromophore.

It localises to the membrane. It is found in the cell projection. The protein resides in the cilium. Its subcellular location is the photoreceptor outer segment. Photoreceptor required for image-forming vision at low light intensity. While most salt water fish species use retinal as chromophore, most freshwater fish use 3-dehydroretinal, or a mixture of retinal and 3-dehydroretinal. Light-induced isomerization of 11-cis to all-trans retinal triggers a conformational change that activates signaling via G-proteins. Subsequent receptor phosphorylation mediates displacement of the bound G-protein alpha subunit by arrestin and terminates signaling. This chain is Rhodopsin (rho), found in Sargocentron xantherythrum (Hawaiian squirrelfish).